The following is a 675-amino-acid chain: Putative elongation factor TypA-like SVR3, chloroplastic (675 aa).

A chloroplast-targeting transit peptide spans 1-58; that stretch reads MELSLSTSSASPAVLRRQASPLLHKQQVLGVSFASALKPGGGALRFPSRRPLPRPITC. The segment at 43–76 is disordered; it reads ALRFPSRRPLPRPITCSASPSTAEPASEVKKKQL. A compositionally biased stretch (low complexity) spans 59–68; the sequence is SASPSTAEPA. One can recognise a tr-type G domain in the interval 80 to 275; sequence DNVRNIAIVA…AIIRCVPGPN (196 aa).

This sequence belongs to the TRAFAC class translation factor GTPase superfamily. Classic translation factor GTPase family. BipA subfamily.

It is found in the plastid. Its subcellular location is the chloroplast. Its function is as follows. Putative chloroplastic elongation factor involved in response to chilling stress. Required for proper chloroplast rRNA processing and/or translation at low temperature. Involved in plastid protein homeostasis. The sequence is that of Putative elongation factor TypA-like SVR3, chloroplastic (SVR3) from Arabidopsis thaliana (Mouse-ear cress).